The sequence spans 406 residues: Bifunctional enzyme IspD/IspF (406 aa).

Residues 1-247 are 2-C-methyl-D-erythritol 4-phosphate cytidylyltransferase; sequence MSLIRVNGEA…TLFFNPAKDT (247 aa). Residues 248 to 406 form a 2-C-methyl-D-erythritol 2,4-cyclodiphosphate synthase region; sequence FIGMGFDTHA…HVSMRYKQKL (159 aa). Positions 254 and 256 each coordinate a divalent metal cation. 4-CDP-2-C-methyl-D-erythritol 2-phosphate contacts are provided by residues 254 to 256 and 280 to 281; these read DTH and HS. His288 contributes to the a divalent metal cation binding site. Residues 302-304, 307-311, 378-381, Phe385, and Lys388 contribute to the 4-CDP-2-C-methyl-D-erythritol 2-phosphate site; these read DIG, FPDND, and TTME.

In the N-terminal section; belongs to the IspD/TarI cytidylyltransferase family. IspD subfamily. This sequence in the C-terminal section; belongs to the IspF family. Requires a divalent metal cation as cofactor.

It carries out the reaction 2-C-methyl-D-erythritol 4-phosphate + CTP + H(+) = 4-CDP-2-C-methyl-D-erythritol + diphosphate. The catalysed reaction is 4-CDP-2-C-methyl-D-erythritol 2-phosphate = 2-C-methyl-D-erythritol 2,4-cyclic diphosphate + CMP. Its pathway is isoprenoid biosynthesis; isopentenyl diphosphate biosynthesis via DXP pathway; isopentenyl diphosphate from 1-deoxy-D-xylulose 5-phosphate: step 2/6. It functions in the pathway isoprenoid biosynthesis; isopentenyl diphosphate biosynthesis via DXP pathway; isopentenyl diphosphate from 1-deoxy-D-xylulose 5-phosphate: step 4/6. Its function is as follows. Bifunctional enzyme that catalyzes the formation of 4-diphosphocytidyl-2-C-methyl-D-erythritol from CTP and 2-C-methyl-D-erythritol 4-phosphate (MEP) (IspD), and catalyzes the conversion of 4-diphosphocytidyl-2-C-methyl-D-erythritol 2-phosphate (CDP-ME2P) to 2-C-methyl-D-erythritol 2,4-cyclodiphosphate (ME-CPP) with a corresponding release of cytidine 5-monophosphate (CMP) (IspF). This is Bifunctional enzyme IspD/IspF from Helicobacter pylori (strain ATCC 700392 / 26695) (Campylobacter pylori).